A 118-amino-acid polypeptide reads, in one-letter code: Large ribosomal subunit protein bL20 (118 aa).

The protein belongs to the bacterial ribosomal protein bL20 family.

In terms of biological role, binds directly to 23S ribosomal RNA and is necessary for the in vitro assembly process of the 50S ribosomal subunit. It is not involved in the protein synthesizing functions of that subunit. The chain is Large ribosomal subunit protein bL20 from Psychrobacter arcticus (strain DSM 17307 / VKM B-2377 / 273-4).